Here is a 287-residue protein sequence, read N- to C-terminus: Large ribosomal subunit protein uL2 (287 aa).

The disordered stretch occupies residues 221-287 (RGSVMNPCDH…SKRSRGGRDS (67 aa)). The segment covering 258-287 (KTRKRNKPSNRFVLRKRRRVSKRSRGGRDS) has biased composition (basic residues).

The protein belongs to the universal ribosomal protein uL2 family. Part of the 50S ribosomal subunit. Forms a bridge to the 30S subunit in the 70S ribosome.

In terms of biological role, one of the primary rRNA binding proteins. Required for association of the 30S and 50S subunits to form the 70S ribosome, for tRNA binding and peptide bond formation. It has been suggested to have peptidyltransferase activity; this is somewhat controversial. Makes several contacts with the 16S rRNA in the 70S ribosome. This Prochlorococcus marinus (strain MIT 9211) protein is Large ribosomal subunit protein uL2.